Here is a 218-residue protein sequence, read N- to C-terminus: Ribose-5-phosphate isomerase A (218 aa).

Residues 28 to 31 (TGST), 81 to 84 (DGAD), and 94 to 97 (KGGG) contribute to the substrate site. The active-site Proton acceptor is E103. A substrate-binding site is contributed by K121.

This sequence belongs to the ribose 5-phosphate isomerase family. Homodimer.

It carries out the reaction aldehydo-D-ribose 5-phosphate = D-ribulose 5-phosphate. Its pathway is carbohydrate degradation; pentose phosphate pathway; D-ribose 5-phosphate from D-ribulose 5-phosphate (non-oxidative stage): step 1/1. In terms of biological role, catalyzes the reversible conversion of ribose-5-phosphate to ribulose 5-phosphate. In Proteus mirabilis (strain HI4320), this protein is Ribose-5-phosphate isomerase A.